The following is a 144-amino-acid chain: MRNCAFRIIAVGKVRKGWIQDGLAMYQKRLPGLIITEVRDASMPREAEAIRAALNSNEVLVPLSEEGEALTSVSFAKRLEKYGSQRLAFVIGGADGLSAELKNSTQWQLSLSAMTLPHELARLLLVEQLYRAQTITQGGKYHRS.

S-adenosyl-L-methionine is bound by residues Leu-63, Gly-92, and 111 to 116 (LSAMTL).

This sequence belongs to the RNA methyltransferase RlmH family. As to quaternary structure, homodimer.

The protein localises to the cytoplasm. The enzyme catalyses pseudouridine(1915) in 23S rRNA + S-adenosyl-L-methionine = N(3)-methylpseudouridine(1915) in 23S rRNA + S-adenosyl-L-homocysteine + H(+). Its function is as follows. Specifically methylates the pseudouridine at position 1915 (m3Psi1915) in 23S rRNA. This chain is Ribosomal RNA large subunit methyltransferase H, found in Prochlorococcus marinus (strain MIT 9313).